Reading from the N-terminus, the 360-residue chain is MDVGVFIPIGNNGWLISENAPQYMPTFELNKAIVQKAEGYGFDFALSMIKLRGFGGKTEFWEHNLESFTLMAGLAAVTSKIQLFATAATLTLPPAIVARMASTIDSISGGRFGVNLVTGWQKPEYSQMGLWPGDEFFGTRYQYLGEYAQVLRDLWATGRSDFKGEHFQMEDCRVSPKPQADMKIICAGSSDAGMAFSAQYADYNFCFGKGVNTPTAFAPAAERLQAACAKTGRHVTSCVLFMVIADETDEAARAKWEHYKAGADEEAIAWLGEQGAADKGADSNIRQMADPTSAVNINMGTLVGSYANVARMLDEIATVPGMQGVMLTFDDFLEGVEAFGQKIQPLMQSRRHVTALKESA.

Residues 49-50, N115, E124, 140-141, and S190 each bind FMN; these read IK and RY.

The protein belongs to the NtaA/SnaA/DszA monooxygenase family. RutA subfamily.

The enzyme catalyses uracil + FMNH2 + NADH + O2 = (Z)-3-ureidoacrylate + FMN + NAD(+) + H2O + H(+). It carries out the reaction thymine + FMNH2 + NADH + O2 = (Z)-2-methylureidoacrylate + FMN + NAD(+) + H2O + H(+). In terms of biological role, catalyzes the pyrimidine ring opening between N-3 and C-4 by an unusual flavin hydroperoxide-catalyzed mechanism, adding oxygen atoms in the process to yield ureidoacrylate peracid, that immediately reacts with FMN forming ureidoacrylate and FMN-N(5)-oxide. The FMN-N(5)-oxide reacts spontaneously with NADH to produce FMN. Requires the flavin reductase RutF to regenerate FMN in vivo. This is Pyrimidine monooxygenase RutA from Stutzerimonas stutzeri (strain A1501) (Pseudomonas stutzeri).